Reading from the N-terminus, the 234-residue chain is uncharacterized protein (234 aa).

4 LRR repeats span residues 44–63 (LEFLSKINGGLTSISDLPKL), 64–84 (KLRKLELRVSGGLEVLAEKCP), 85–107 (NLTHLYLSGNKIKDLSTIEPLKQ), and 111–134 (LKSLDLFNCEVTNLNDYGENVFKL). The tract at residues 161-234 (EGLDDEEEGE…GEEERGQKRK (74 aa)) is disordered. The segment covering 163–226 (LDDEEEGEHE…GEEDEEELGE (64 aa)) has biased composition (acidic residues).

The protein belongs to the ANP32 family. Expressed in activated stem cells, such as mobilized CD34+ cells and cord blood CD34+ cells, but not in resting bone marrow CD34+ cells. Expressed in a variety of neoplastic cell lines, mainly in prostatic adenocarcinoma cell lines. Not expressed in normal prostatic tissue.

This is an uncharacterized protein from Homo sapiens (Human).